An 85-amino-acid chain; its full sequence is Small ribosomal subunit protein uS17 (85 aa).

This sequence belongs to the universal ribosomal protein uS17 family. Part of the 30S ribosomal subunit.

Its function is as follows. One of the primary rRNA binding proteins, it binds specifically to the 5'-end of 16S ribosomal RNA. The polypeptide is Small ribosomal subunit protein uS17 (Geobacter sp. (strain M21)).